Here is a 264-residue protein sequence, read N- to C-terminus: Small ribosomal subunit protein eS1 (264 aa).

Lysine 34 bears the N6-acetyllysine; alternate mark. Residue lysine 34 forms a Glycyl lysine isopeptide (Lys-Gly) (interchain with G-Cter in SUMO2); alternate linkage. Residue lysine 56 is modified to N6-acetyllysine. At tyrosine 155 the chain carries ADP-ribosyltyrosine. The interval 232-264 (HGEGSSSGKATGDETGAKVERADGYEPPVQESV) is disordered. Phosphoserine is present on residues serine 236 and serine 237. Basic and acidic residues predominate over residues 242-255 (TGDETGAKVERADG). Lysine 249 is modified (N6-acetyllysine; alternate). Lysine 249 is covalently cross-linked (Glycyl lysine isopeptide (Lys-Gly) (interchain with G-Cter in SUMO2); alternate). Phosphotyrosine is present on tyrosine 256. A Phosphoserine modification is found at serine 263.

Belongs to the eukaryotic ribosomal protein eS1 family. As to quaternary structure, component of the small ribosomal subunit. Mature ribosomes consist of a small (40S) and a large (60S) subunit. The 40S subunit contains about 33 different proteins and 1 molecule of RNA (18S). The 60S subunit contains about 49 different proteins and 3 molecules of RNA (28S, 5.8S and 5S). Identified in a IGF2BP1-dependent mRNP granule complex containing untranslated mRNAs. Binds with high affinity to IPO4. Interacts with DDIT3. Part of the small subunit (SSU) processome, composed of more than 70 proteins and the RNA chaperone small nucleolar RNA (snoRNA) U3. Post-translationally, ADP-ribosylated at Tyr-155 by PARP1 in presence of HPF1.

The protein resides in the cytoplasm. It localises to the nucleus. The protein localises to the nucleolus. Component of the small ribosomal subunit. The ribosome is a large ribonucleoprotein complex responsible for the synthesis of proteins in the cell. Part of the small subunit (SSU) processome, first precursor of the small eukaryotic ribosomal subunit. During the assembly of the SSU processome in the nucleolus, many ribosome biogenesis factors, an RNA chaperone and ribosomal proteins associate with the nascent pre-rRNA and work in concert to generate RNA folding, modifications, rearrangements and cleavage as well as targeted degradation of pre-ribosomal RNA by the RNA exosome. May play a role during erythropoiesis through regulation of transcription factor DDIT3. The sequence is that of Small ribosomal subunit protein eS1 from Macaca fascicularis (Crab-eating macaque).